The chain runs to 110 residues: MTTRRIIGQDGEEKTYLDVDPRGPPGPSNISPAVPASVIWKLMSFTFAMITLPIGTYFFTVNYVFGGNATYAGALAAIMANVVLIAYVIMAFKDDQAEQAEDAREAKKEL.

The segment at 1–28 (MTTRRIIGQDGEEKTYLDVDPRGPPGPS) is disordered. Residues 1 to 44 (MTTRRIIGQDGEEKTYLDVDPRGPPGPSNISPAVPASVIWKLMS) lie on the Cytoplasmic side of the membrane. The segment covering 11-21 (GEEKTYLDVDP) has biased composition (basic and acidic residues). A helical transmembrane segment spans residues 45–65 (FTFAMITLPIGTYFFTVNYVF). The Lumenal portion of the chain corresponds to 66–71 (GGNATY). The chain crosses the membrane as a helical span at residues 72–92 (AGALAAIMANVVLIAYVIMAF). At 93-110 (KDDQAEQAEDAREAKKEL) the chain is on the cytoplasmic side. Residues 107-110 (KKEL) carry the Prevents secretion from ER motif.

Belongs to the VMA21 family.

Its subcellular location is the endoplasmic reticulum membrane. The protein resides in the endoplasmic reticulum-Golgi intermediate compartment membrane. It is found in the cytoplasmic vesicle. It localises to the COPII-coated vesicle membrane. In terms of biological role, required for the assembly of the V0 complex of the vacuolar ATPase (V-ATPase) in the endoplasmic reticulum. This chain is Vacuolar ATPase assembly integral membrane protein VMA21, found in Phaeosphaeria nodorum (strain SN15 / ATCC MYA-4574 / FGSC 10173) (Glume blotch fungus).